A 925-amino-acid chain; its full sequence is Protein translocase subunit SecA (925 aa).

ATP contacts are provided by residues Gln-87, 105-109 (GEGKT), and Asp-515. Zn(2+) is bound by residues Cys-909, Cys-911, Cys-920, and His-921.

This sequence belongs to the SecA family. Monomer and homodimer. Part of the essential Sec protein translocation apparatus which comprises SecA, SecYEG and auxiliary proteins SecDF-YajC and YidC. Zn(2+) serves as cofactor.

The protein localises to the cell inner membrane. Its subcellular location is the cytoplasm. The catalysed reaction is ATP + H2O + cellular proteinSide 1 = ADP + phosphate + cellular proteinSide 2.. Part of the Sec protein translocase complex. Interacts with the SecYEG preprotein conducting channel. Has a central role in coupling the hydrolysis of ATP to the transfer of proteins into and across the cell membrane, serving both as a receptor for the preprotein-SecB complex and as an ATP-driven molecular motor driving the stepwise translocation of polypeptide chains across the membrane. The sequence is that of Protein translocase subunit SecA from Cupriavidus necator (strain ATCC 17699 / DSM 428 / KCTC 22496 / NCIMB 10442 / H16 / Stanier 337) (Ralstonia eutropha).